The sequence spans 261 residues: 14-3-3-like protein B (261 aa).

The disordered stretch occupies residues 237-261 (DIPEDGEDSQKANGTAKFGGGDDAE).

The protein belongs to the 14-3-3 family.

The polypeptide is 14-3-3-like protein B (Vicia faba (Broad bean)).